The primary structure comprises 330 residues: DNA-directed RNA polymerase subunit alpha (330 aa).

The interval 1–237 (MYTEINEMLT…RQLHAFVDMK (237 aa)) is alpha N-terminal domain (alpha-NTD). The interval 251-330 (FDPVLLRSVD…ENWPPASLGE (80 aa)) is alpha C-terminal domain (alpha-CTD).

This sequence belongs to the RNA polymerase alpha chain family. Homodimer. The RNAP catalytic core consists of 2 alpha, 1 beta, 1 beta' and 1 omega subunit. When a sigma factor is associated with the core the holoenzyme is formed, which can initiate transcription.

It catalyses the reaction RNA(n) + a ribonucleoside 5'-triphosphate = RNA(n+1) + diphosphate. Functionally, DNA-dependent RNA polymerase catalyzes the transcription of DNA into RNA using the four ribonucleoside triphosphates as substrates. The polypeptide is DNA-directed RNA polymerase subunit alpha (Legionella pneumophila (strain Corby)).